The chain runs to 207 residues: Coiled-coil domain-containing protein 124 homolog (207 aa).

Residues 1–90 (MGNPKKRAEK…KAAKKNSSLD (90 aa)) form a disordered region. Residues 5-71 (KKRAEKAEAA…RLEKEEMESL (67 aa)) adopt a coiled-coil conformation. Composition is skewed to basic and acidic residues over residues 9-28 (EKAE…KKDA) and 41-65 (NKKE…RLEK).

Belongs to the CCDC124 family. As to quaternary structure, associates with translationally inactive ribosomes in the nonrotated state.

It localises to the cytoplasm. It is found in the nucleus. In terms of biological role, ribosome-binding protein involved in ribosome hibernation by associating with translationally inactive ribosomes. Required for translational recovery after starvation from stationary phase. May facilitate rapid translation reactivation by stabilizing the recycling-competent state of inactive ribosomes. In Schizosaccharomyces pombe (strain 972 / ATCC 24843) (Fission yeast), this protein is Coiled-coil domain-containing protein 124 homolog.